The following is a 327-amino-acid chain: Ubiquinone biosynthesis protein COQ4, mitochondrial (327 aa).

Residues His-208, Asp-209, His-212, and Glu-224 each coordinate Zn(2+).

It belongs to the COQ4 family. Component of a multi-subunit COQ enzyme complex, composed of at least COQ3, COQ4, COQ5, COQ6, COQ7 and COQ9. Zn(2+) is required as a cofactor.

It is found in the mitochondrion inner membrane. It catalyses the reaction a 4-hydroxy-3-methoxy-5-(all-trans-polyprenyl)benzoate + H(+) = a 2-methoxy-6-(all-trans-polyprenyl)phenol + CO2. It participates in cofactor biosynthesis; ubiquinone biosynthesis. In terms of biological role, lyase that catalyzes the C1-decarboxylation of 4-hydroxy-3-methoxy-5-(all-trans-polyprenyl)benzoic acid into 2-methoxy-6-(all-trans-polyprenyl)phenol during ubiquinone biosynthesis. This is Ubiquinone biosynthesis protein COQ4, mitochondrial from Lachancea thermotolerans (strain ATCC 56472 / CBS 6340 / NRRL Y-8284) (Yeast).